We begin with the raw amino-acid sequence, 84 residues long: Exodeoxyribonuclease 7 small subunit (84 aa).

This sequence belongs to the XseB family. In terms of assembly, heterooligomer composed of large and small subunits.

Its subcellular location is the cytoplasm. It carries out the reaction Exonucleolytic cleavage in either 5'- to 3'- or 3'- to 5'-direction to yield nucleoside 5'-phosphates.. Its function is as follows. Bidirectionally degrades single-stranded DNA into large acid-insoluble oligonucleotides, which are then degraded further into small acid-soluble oligonucleotides. This Yersinia enterocolitica serotype O:8 / biotype 1B (strain NCTC 13174 / 8081) protein is Exodeoxyribonuclease 7 small subunit.